Consider the following 429-residue polypeptide: Keratin, type I cytoskeletal 18 (429 aa).

Residues 2-78 are head; it reads SYSRSVYSSS…NVNLIGGGQN (77 aa). Residues 79-114 form a coil 1A region; the sequence is EKETMQDLNDRLASYLERVRSLEAANKKLEVQIRQH. The IF rod domain maps to 79-389; it reads EKETMQDLND…RLLEGDGSFD (311 aa). The tract at residues 115–130 is linker 1; sequence TEKKGPSKDWSPYYKT. Residues 131 to 222 are coil 1B; the sequence is IEDLRKQVFD…KNHQDDVTEL (92 aa). The tract at residues 223-246 is linker 12; the sequence is QAQVARSAVTVEVDAPKSQDLGKI. A coil 2 region spans residues 247-385; that stretch reads MTELRAQYDG…HTYRRLLEGD (139 aa). The segment at 386-429 is tail; that stretch reads GSFDLQDAVPTVTTQTVKKVITTTQRIVDGKVVSESNDTEVLKS.

The protein belongs to the intermediate filament family. In terms of assembly, heterotetramer of two type I and two type II keratins. Keratin-18 associates with keratin-8. Post-translationally, phosphorylated. Proteolytically cleaved by caspases during epithelial cell apoptosis.

In terms of biological role, when phosphorylated, plays a role in filament reorganization. The protein is Keratin, type I cytoskeletal 18 of Xenopus tropicalis (Western clawed frog).